A 198-amino-acid polypeptide reads, in one-letter code: uncharacterized protein (198 aa).

The C4-type zinc finger occupies 9–43; that stretch reads CPVCGGKGTFVITSHQIDIPYFGPVLETTMICEKC.

Belongs to the ZPR1 family.

This is an uncharacterized protein from Methanocaldococcus jannaschii (strain ATCC 43067 / DSM 2661 / JAL-1 / JCM 10045 / NBRC 100440) (Methanococcus jannaschii).